A 242-amino-acid polypeptide reads, in one-letter code: MAAATRGCRPWGSLLGLLGLVSAAAAAWDLASLRCTLGAFCECDFRPDLPGLECDLAQHLAGQHLAKALVVKALKAFVRDPAPTKPLVLSLHGWTGTGKSYVSSLLAHYLFQGGLRSPRVHHFSPVLHFPHPSHIERYKKDLKSWVQGNLTACGRSLFLFDEMDKMPPGLMEVLRPFLGSSWVVYGTNYRKAIFIFIRWLLKLGHHGRAPPRRSGALPPAPAAPRPALRAQRAGPAGPGAKG.

An N-terminal signal peptide occupies residues 1–26 (MAAATRGCRPWGSLLGLLGLVSAAAA). The propeptide occupies 27–189 (AWDLASLRCT…SSWVVYGTNY (163 aa)). 93 to 100 (GWTGTGKS) provides a ligand contact to ATP. N-linked (GlcNAc...) asparagine glycosylation is present at asparagine 149. The interval 210–242 (PPRRSGALPPAPAAPRPALRAQRAGPAGPGAKG) is disordered. Positions 225-235 (RPALRAQRAGP) are enriched in low complexity. Lysine amide is present on lysine 241.

This sequence belongs to the ClpA/ClpB family. Torsin subfamily. In terms of processing, amidation of salusin-alpha(29-Gly) by peptidylglycine alpha-amidating monooxygenase, PAM, converts Lys-241-Gly-242 to Lys-241-NH2 and gives raise to salusin-alpha. In terms of tissue distribution, isoform 4 is ubiquitously expressed, with high level in vascular endothelial cells and vascular smooth muscle cells.

Its subcellular location is the secreted. In terms of biological role, salusins -alpha and -beta may be endocrine and/or paracrine factors able to increase intracellular calcium concentrations and induce cell mitogenesis. Salusins may also be potent hypotensive peptides. The chain is Prosalusin (TOR2A) from Homo sapiens (Human).